Reading from the N-terminus, the 294-residue chain is Bifunctional protein FolD (294 aa).

Residues 171–173 (GRS), Ser-196, and Ile-237 contribute to the NADP(+) site.

This sequence belongs to the tetrahydrofolate dehydrogenase/cyclohydrolase family. In terms of assembly, homodimer.

The catalysed reaction is (6R)-5,10-methylene-5,6,7,8-tetrahydrofolate + NADP(+) = (6R)-5,10-methenyltetrahydrofolate + NADPH. It carries out the reaction (6R)-5,10-methenyltetrahydrofolate + H2O = (6R)-10-formyltetrahydrofolate + H(+). Its pathway is one-carbon metabolism; tetrahydrofolate interconversion. Catalyzes the oxidation of 5,10-methylenetetrahydrofolate to 5,10-methenyltetrahydrofolate and then the hydrolysis of 5,10-methenyltetrahydrofolate to 10-formyltetrahydrofolate. In Synechocystis sp. (strain ATCC 27184 / PCC 6803 / Kazusa), this protein is Bifunctional protein FolD.